Reading from the N-terminus, the 224-residue chain is Thiamine-phosphate synthase (224 aa).

4-amino-2-methyl-5-(diphosphooxymethyl)pyrimidine contacts are provided by residues 44–48 and Asn-79; that span reads QFREK. The Mg(2+) site is built by Asp-80 and Asp-99. 4-amino-2-methyl-5-(diphosphooxymethyl)pyrimidine is bound at residue Ser-117. Residue 143 to 145 coordinates 2-[(2R,5Z)-2-carboxy-4-methylthiazol-5(2H)-ylidene]ethyl phosphate; sequence TET. Lys-146 lines the 4-amino-2-methyl-5-(diphosphooxymethyl)pyrimidine pocket. 2-[(2R,5Z)-2-carboxy-4-methylthiazol-5(2H)-ylidene]ethyl phosphate is bound by residues Gly-175 and 195 to 196; that span reads IS.

This sequence belongs to the thiamine-phosphate synthase family. Mg(2+) is required as a cofactor.

It catalyses the reaction 2-[(2R,5Z)-2-carboxy-4-methylthiazol-5(2H)-ylidene]ethyl phosphate + 4-amino-2-methyl-5-(diphosphooxymethyl)pyrimidine + 2 H(+) = thiamine phosphate + CO2 + diphosphate. It carries out the reaction 2-(2-carboxy-4-methylthiazol-5-yl)ethyl phosphate + 4-amino-2-methyl-5-(diphosphooxymethyl)pyrimidine + 2 H(+) = thiamine phosphate + CO2 + diphosphate. The enzyme catalyses 4-methyl-5-(2-phosphooxyethyl)-thiazole + 4-amino-2-methyl-5-(diphosphooxymethyl)pyrimidine + H(+) = thiamine phosphate + diphosphate. Its pathway is cofactor biosynthesis; thiamine diphosphate biosynthesis; thiamine phosphate from 4-amino-2-methyl-5-diphosphomethylpyrimidine and 4-methyl-5-(2-phosphoethyl)-thiazole: step 1/1. In terms of biological role, condenses 4-methyl-5-(beta-hydroxyethyl)thiazole monophosphate (THZ-P) and 2-methyl-4-amino-5-hydroxymethyl pyrimidine pyrophosphate (HMP-PP) to form thiamine monophosphate (TMP). The polypeptide is Thiamine-phosphate synthase (Bacillus velezensis (strain DSM 23117 / BGSC 10A6 / LMG 26770 / FZB42) (Bacillus amyloliquefaciens subsp. plantarum)).